The chain runs to 165 residues: Transcription elongation factor GreA (165 aa).

Residues 55-78 (AAKEEQGKQELRVRQLTQLLESAK) adopt a coiled-coil conformation.

This sequence belongs to the GreA/GreB family.

Its function is as follows. Necessary for efficient RNA polymerase transcription elongation past template-encoded arresting sites. The arresting sites in DNA have the property of trapping a certain fraction of elongating RNA polymerases that pass through, resulting in locked ternary complexes. Cleavage of the nascent transcript by cleavage factors such as GreA or GreB allows the resumption of elongation from the new 3'terminus. GreA releases sequences of 2 to 3 nucleotides. This Streptomyces coelicolor (strain ATCC BAA-471 / A3(2) / M145) protein is Transcription elongation factor GreA.